The sequence spans 245 residues: 1-(5-phosphoribosyl)-5-[(5-phosphoribosylamino)methylideneamino] imidazole-4-carboxamide isomerase (245 aa).

The Proton acceptor role is filled by Asp7. The active-site Proton donor is Asp129.

This sequence belongs to the HisA/HisF family.

It localises to the cytoplasm. It catalyses the reaction 1-(5-phospho-beta-D-ribosyl)-5-[(5-phospho-beta-D-ribosylamino)methylideneamino]imidazole-4-carboxamide = 5-[(5-phospho-1-deoxy-D-ribulos-1-ylimino)methylamino]-1-(5-phospho-beta-D-ribosyl)imidazole-4-carboxamide. It participates in amino-acid biosynthesis; L-histidine biosynthesis; L-histidine from 5-phospho-alpha-D-ribose 1-diphosphate: step 4/9. The protein is 1-(5-phosphoribosyl)-5-[(5-phosphoribosylamino)methylideneamino] imidazole-4-carboxamide isomerase of Salmonella choleraesuis (strain SC-B67).